The sequence spans 66 residues: Phylloseptin-Az2 (66 aa).

An N-terminal signal peptide occupies residues 1–22 (MAFLKKSLFLVLFLGLVSLSIC). Positions 23-44 (EEEKRETEEKENEQEDDDKSEE) are excised as a propeptide. The tract at residues 24-45 (EEKRETEEKENEQEDDDKSEEK) is disordered. A compositionally biased stretch (acidic residues) spans 31–41 (EKENEQEDDDK). Phenylalanine amide is present on Phe-65.

In terms of tissue distribution, expressed by the skin glands.

It is found in the secreted. Has antibacterial activity against the Gram-negative bacteria E.coli ATCC 11775 (MIC=7.2 uM), and the Gram-positive bacteria S.aureus ATCC 12600 (MIC=3.6 uM) and M.luteus ATCC 49732 (MIC=1.8 uM). Does not inhibit the growth of the fungus C.albicans. The sequence is that of Phylloseptin-Az2 from Pithecopus azureus (Orange-legged monkey tree frog).